The following is a 1325-amino-acid chain: Lysine-specific demethylase 3A (1325 aa).

Disordered regions lie at residues 249–284 (SKRIGGVKRKPSENSGSVDAKHTKSSPEVSQSQGHV), 300–333 (PANKDQRHQGLPLPANSPPNLGAETPQGTCRRSV), and 372–399 (QNGKYTSLISSRSSSLSDSTNGKETGLK). A compositionally biased stretch (polar residues) spans 274–283 (SPEVSQSQGH). A compositionally biased stretch (low complexity) spans 378–390 (SLISSRSSSLSDS). The C6-type zinc-finger motif lies at 669–694 (CDVCDTTIFNLRWVCSKCGFGVCVDC). 2 disordered regions span residues 772–791 (TLKEDSKQNLVPGERTSLQQ) and 798–819 (PQLPTHEPPVKPAAGSKQTASV). An LXXLL motif motif is present at residues 888–892 (LRNLL). One can recognise a JmjC domain in the interval 1062-1285 (MPSRFDDLMK…HCFWLTQEFR (224 aa)). Fe cation-binding residues include H1124, D1126, and H1253.

It belongs to the JHDM2 histone demethylase family. The cofactor is Fe(2+).

The protein localises to the cytoplasm. Its subcellular location is the nucleus. The enzyme catalyses N(6),N(6)-dimethyl-L-lysyl(9)-[histone H3] + 2 2-oxoglutarate + 2 O2 = L-lysyl(9)-[histone H3] + 2 formaldehyde + 2 succinate + 2 CO2. In terms of biological role, histone demethylase that specifically demethylates 'Lys-9' of histone H3, thereby playing a central role in histone code. Preferentially demethylates mono- and dimethylated H3 'Lys-9' residue, with a preference for dimethylated residue, while it has weak or no activity on trimethylated H3 'Lys-9'. Demethylation of Lys residue generates formaldehyde and succinate. The protein is Lysine-specific demethylase 3A (KDM3A) of Gallus gallus (Chicken).